A 288-amino-acid chain; its full sequence is Programmed cell death protein 1 (288 aa).

The N-terminal stretch at 1–24 (MQIPQAPWPVVWAVLQLGWRPGWF) is a signal peptide. Positions 25–34 (LDSPDRPWNP) are nivolumab binding. The Extracellular segment spans residues 25 to 170 (LDSPDRPWNP…RPAGQFQTLV (146 aa)). Positions 35–145 (PTFSPALLVV…ESLRAELRVT (111 aa)) constitute an Ig-like V-type domain. N-linked (GlcNAc...) asparagine glycosylation is found at Asn-49, Asn-58, Asn-74, and Asn-116. A disulfide bridge connects residues Cys-54 and Cys-123. The interval 70–77 (MSPSNQTD) is interaction with CD274/PDCD1L1. The segment at 74-99 (NQTDKLAAFPEDRSQPGQDCRFRVTQ) is pembrolizumab binding. The helical transmembrane segment at 171 to 191 (VGVVGGLLGSLVLLVWVLAVI) threads the bilayer. Residues 192-288 (CSRAARGTIG…PEDGHCSWPL (97 aa)) lie on the Cytoplasmic side of the membrane. The short motif at 221 to 226 (VDYGEL) is the ITIM motif element. Tyr-223 carries the post-translational modification Phosphotyrosine. Residue Lys-233 forms a Glycyl lysine isopeptide (Lys-Gly) (interchain with G-Cter in ubiquitin) linkage. Phosphothreonine; by MAPK3 is present on Thr-234. Residues 247–251 (EYATI) carry the ITSM motif motif. A Phosphotyrosine modification is found at Tyr-248. Residues 254–288 (PSGMGTSSPARRGSADGPRSAQPLRPEDGHCSWPL) form a disordered region. Residues 278 to 288 (RPEDGHCSWPL) show a composition bias toward basic and acidic residues.

In terms of assembly, monomer. Interacts with CD274/PDCD1L1. Interacts with CD273/PDCD1LG2. Interacts with FBXO38; leading to ubiquitination and degradation of PDCD1 by the proteasome. In terms of processing, ubiquitinated at Lys-233 by the SCF(FBXO38) complex, leading to its proteasomal degradation. Ubiquitinated via 'Lys-48'-linked polyubiquitin chains. Deubiquitinated and thus stabilized by USP5. Tyrosine phosphorylated at Tyr-223 (within ITIM motif) and Tyr-248 (ITSM motif) upon ligand binding. Phosphorylation at Tyr-248 promotes the recruitment of the protein tyrosine phosphatase PTPN11/SHP-2 that mediates dephosphorylation of key TCR proximal signaling molecules, such as ZAP70, PRKCQ/PKCtheta and CD247/CD3zeta. Phosphorylation at Thr-234 promotes the recruitment of the deubiquitinase USP5. Post-translationally, N-glycosylation at Asn-58 contains at least two N-acetylglucosamine units and one fucose. N-glycosylation does not affect binding to nivolumab drug.

It is found in the cell membrane. With respect to regulation, inhibited by pembrolizumab (also named MK-3475 or lambrolizumab), a monoclonal antibody that prevents the interaction with CD274/PDCD1L1. Inhibited by nivolumab (also named ONO-4538, BMS-936558 or Opdivo), a monoclonal antibody that prevents the interaction with CD274/PDCD1L1. The interaction with nivolumab is not dependent on glycosylation and depends on a loop at the N-terminus (N-terminal loop, corresponding to residues 25-34). Targeting the interaction between PDCD1 and CD274/PDCD1L1 with pembrolizumab and nivolumab antibodies has demonstrated great promise as a strategy for controlling and eradicating cancer. Pembrolizumab and nivolumab are used for treatment of patients with advanced melanoma. These antibodies are also effective against other cancers, such as non-small cell lung cancer, renal cell carcinoma, bladder cancer and Hodgkin's lymphoma. Its function is as follows. Inhibitory receptor on antigen activated T-cells that plays a critical role in induction and maintenance of immune tolerance to self. Delivers inhibitory signals upon binding to ligands CD274/PDCD1L1 and CD273/PDCD1LG2. Following T-cell receptor (TCR) engagement, PDCD1 associates with CD3-TCR in the immunological synapse and directly inhibits T-cell activation. Suppresses T-cell activation through the recruitment of PTPN11/SHP-2: following ligand-binding, PDCD1 is phosphorylated within the ITSM motif, leading to the recruitment of the protein tyrosine phosphatase PTPN11/SHP-2 that mediates dephosphorylation of key TCR proximal signaling molecules, such as ZAP70, PRKCQ/PKCtheta and CD247/CD3zeta. In terms of biological role, the PDCD1-mediated inhibitory pathway is exploited by tumors to attenuate anti-tumor immunity and escape destruction by the immune system, thereby facilitating tumor survival. The interaction with CD274/PDCD1L1 inhibits cytotoxic T lymphocytes (CTLs) effector function. The blockage of the PDCD1-mediated pathway results in the reversal of the exhausted T-cell phenotype and the normalization of the anti-tumor response, providing a rationale for cancer immunotherapy. This is Programmed cell death protein 1 from Homo sapiens (Human).